A 335-amino-acid polypeptide reads, in one-letter code: 2-acylglycerol O-acyltransferase 2 (335 aa).

A run of 2 helical transmembrane segments spans residues 24-44 and 104-124; these read WAVS…LLLF and YIMG…NFCT. An N-linked (GlcNAc...) asparagine glycan is attached at Asn206.

This sequence belongs to the diacylglycerol acyltransferase family.

Its subcellular location is the endoplasmic reticulum membrane. The protein localises to the cytoplasm. The protein resides in the perinuclear region. The catalysed reaction is a 2-acylglycerol + an acyl-CoA = a 1,2-diacylglycerol + CoA. It catalyses the reaction a 2-acylglycerol + an acyl-CoA = a 1,2-diacyl-sn-glycerol + CoA. The enzyme catalyses a 2-acylglycerol + an acyl-CoA = a 2,3-diacyl-sn-glycerol + CoA. It carries out the reaction a 1-acylglycerol + an acyl-CoA = a 1,2-diacylglycerol + CoA. The catalysed reaction is a 1-acylglycerol + an acyl-CoA = a 1,3-diacylglycerol + CoA. It catalyses the reaction 1-O-alkylglycerol + an acyl-CoA = 1-O-alkyl-3-acylglycerol + CoA. The enzyme catalyses an acyl-CoA + a 1,2-diacyl-sn-glycerol = a triacyl-sn-glycerol + CoA. The protein operates within glycerolipid metabolism; triacylglycerol biosynthesis. Its function is as follows. Involved in glycerolipid synthesis and lipid metabolism. Catalyzes the formation of diacylglycerol, the precursor of triacylglycerol, by transferring the acyl chain of a fatty acyl-CoA to a monoacylglycerol. Plays a central role in absorption of dietary fat in the small intestine by catalyzing the resynthesis of triacylglycerol in enterocytes. Has a preference toward monoacylglycerols containing unsaturated fatty acids in an order of C18:3 &gt; C18:2 &gt; C18:1 &gt; C18:0 at sn-2. Able to use 1-monoalkylglycerol (1-MAkG, 1-O-alkylglycerol) as an acyl acceptor for the synthesis of monoalkyl-monoacylglycerol (MAMAG, 1-O-alkyl-3-acylglycerol or 1-O-alkyl-2-acylglycerol) and subsequently, with lower efficiency, may add another acyl chain producing monoalkyl-diacylglycerol (MADAG, 1-O-alkyl-2,3-diacylglycerol). Possesses weak but significant activity with diacylglycerol as substrate, producing triacylglycerol (triacyl-sn-glycerol). In Xenopus tropicalis (Western clawed frog), this protein is 2-acylglycerol O-acyltransferase 2 (mogat2).